A 343-amino-acid chain; its full sequence is MVADEEVRVRAEAWNNAFGYIKPTAVATAVELGLPDILENHDGPMSLLELSAATDCPAEPLHRLMRFLVFHGIFKKTAKPPLSNEAVYYARTALSRLFTRDELGDFMLLQTGPLSQHPAGLTASSLRTGKPQFIRSVNGEDSWTDPVNGYHMKVFSDAMAAHARETTAAIVRYCPAAFEGIGTVVDVGGRHGVALEKLVAAFPWVRGISFDLPEIVAKAPPRPGIEFVGGSFFESVPKGDLVLLMWILHDWSDESCIEIMKKCKEAIPTSGKVMIVDAIVDEDGEGDDFAGARLSLDLIMMAVLARGKERTYREWEYLLREAGFTKFVVKNINTVEFVIEAYP.

Position 211 (Asp211) interacts with S-adenosyl-L-methionine. His249 serves as the catalytic Proton acceptor.

The protein belongs to the class I-like SAM-binding methyltransferase superfamily. Cation-independent O-methyltransferase family. In terms of assembly, homodimer.

It carries out the reaction apigenin + S-adenosyl-L-methionine = acacetin + S-adenosyl-L-homocysteine + H(+). The catalysed reaction is kaempferol + S-adenosyl-L-methionine = kaempferide + S-adenosyl-L-homocysteine + H(+). The enzyme catalyses isorhamnetin + S-adenosyl-L-methionine = 3',4'-O-dimethylquercetin + S-adenosyl-L-homocysteine + 2 H(+). It catalyses the reaction scutellarein + S-adenosyl-L-methionine = scutellarein 4'-methyl ether + S-adenosyl-L-homocysteine + H(+). It carries out the reaction (2S)-naringenin + S-adenosyl-L-methionine = (2S)-naringenin 4'-methyl ether + S-adenosyl-L-homocysteine + H(+). The catalysed reaction is 4',7,8-trihydroxyflavone + S-adenosyl-L-methionine = 7,8-dihydroxy-4'-methoxyflavone + S-adenosyl-L-homocysteine + H(+). The enzyme catalyses taxifolin + S-adenosyl-L-methionine = taxifolin 4'-methyl ether + S-adenosyl-L-homocysteine + H(+). Its pathway is flavonoid metabolism. Functionally, flavonoid 4'-O-methyltransferase involved in the biosynthesis of polymethoxylated flavonoids natural products such as pebrellin, aroma compounds which contribute to the flavor of peppermint, and exhibit pharmacological activities such as anti-allergic, anti-oxidant, antibacterial, anti-proliferative, and anti-inflammatory effects. Catalyzes S-adenosylmethionine-dependent regioselective 4'-O-methylation of flavonoids; active on various hydroxylated flavonoid substrates, including isorhamnetin, kaempferol, apigenin (API), scutellarein (6-hydroxy-apigenin, 6-OH-API, SCU), taxifolin, 7,8,4'-trihydroxy-flavone and naringenin (NAR), and, with a lower efficiency, quercetin, rhamnetin, luteolin (LUT) and 7,8,3',4'-tetrahydroxy-flavone. The protein is Flavonoid 4'-O-methyltransferase 4 of Mentha piperita (Peppermint).